The primary structure comprises 303 residues: UDP-3-O-acyl-N-acetylglucosamine deacetylase (303 aa).

Histidine 78, histidine 237, and aspartate 241 together coordinate Zn(2+). Histidine 264 serves as the catalytic Proton donor.

It belongs to the LpxC family. Zn(2+) is required as a cofactor.

It carries out the reaction a UDP-3-O-[(3R)-3-hydroxyacyl]-N-acetyl-alpha-D-glucosamine + H2O = a UDP-3-O-[(3R)-3-hydroxyacyl]-alpha-D-glucosamine + acetate. The protein operates within glycolipid biosynthesis; lipid IV(A) biosynthesis; lipid IV(A) from (3R)-3-hydroxytetradecanoyl-[acyl-carrier-protein] and UDP-N-acetyl-alpha-D-glucosamine: step 2/6. Its function is as follows. Catalyzes the hydrolysis of UDP-3-O-myristoyl-N-acetylglucosamine to form UDP-3-O-myristoylglucosamine and acetate, the committed step in lipid A biosynthesis. The polypeptide is UDP-3-O-acyl-N-acetylglucosamine deacetylase (Xanthomonas campestris pv. campestris (strain 8004)).